The chain runs to 581 residues: Sodium/hydrogen exchanger 8 (581 aa).

11 helical membrane-spanning segments follow: residues Met-60–Ile-80, Leu-84–Ile-104, Pro-123–His-143, Leu-156–Leu-176, Phe-191–Ala-211, Phe-264–Leu-284, Gly-311–Met-331, Val-354–Pro-374, Ile-379–Pro-399, Met-417–Leu-437, and Thr-451–Ile-471. At Thr-510 the chain carries Phosphothreonine. Residues Ser-571 and Ser-573 each carry the phosphoserine modification.

This sequence belongs to the monovalent cation:proton antiporter 1 (CPA1) transporter (TC 2.A.36) family. In terms of tissue distribution, ubiquitous. Strongly expressed in skeletal muscle and kidney. Detected throughout the entire gastrointestinal tract, with high expression detected in stomach, duodenum and ascending colon.

The protein localises to the golgi apparatus membrane. Its subcellular location is the golgi apparatus. It is found in the trans-Golgi network membrane. It localises to the endosome. The protein resides in the multivesicular body membrane. The protein localises to the apical cell membrane. Its subcellular location is the cytoplasmic vesicle. It is found in the secretory vesicle. It localises to the acrosome. It carries out the reaction Na(+)(in) + H(+)(out) = Na(+)(out) + H(+)(in). HOE642 inhibits SLC9A8 activity. Its function is as follows. Na(+)/H(+) antiporter. Mediates the electoneutral exchange of intracellular H(+) ions for extracellular Na(+) in 1:1 stoichiometry. Acts as an Na(+)/H(+) exchanger in the trans-Golgi. Contributes to the regulation of pH regulation of Golgi apparatus, and consequently, in protein trafficking and endosomal morphology. In germ cells, plays a crucial role in acrosome biogenesis and sperm development, probably by playing a role in the fusion of the Golgi-derived vesicles that form the acrosomal cap. Can also be active at the cell surface of specialized cells. In the small intestine, at the cell membrane, plays a major physiological role in transepithelial absorption of Na(+) and regulates intracellular pH homeostasis of intestinal epithelial cells. Acts as an important regulator of mucosal integrity in the intestine and in the stomach, could mediate the pH fluctuation necessary for mucin exocytosis or assist membrane trafficking of other proteins. Plays a role in photoreceptor survival and in the maintenance of intracellular pH homeostasis in retinal pigment epithelium (RPE cells). In Homo sapiens (Human), this protein is Sodium/hydrogen exchanger 8.